A 250-amino-acid chain; its full sequence is MSGHSKWATTKHKKAVIDAKRGKLFAKMIKNIEVAARTGGADPAGNPTLFDAIQKAKKSSVPNKNIDSAVKRGAGLEAGGADYETIMYEGYGPNGVAVLIECLTDNRNRAASDVRVAMTRNGGNMADPGSVSYLFNRKGVVIVPKGELSEDDVLGAVLDAGAEEVNDLGESFEVVSEATDLVAVRTALQDAGIDYDSADANFVPTMQVELDEEGARKIFKLIDALEDSDDVQNVFANFDVSDEVMEKVDA.

This sequence belongs to the TACO1 family.

The protein localises to the cytoplasm. The chain is Probable transcriptional regulatory protein SAV_6832 from Streptomyces avermitilis (strain ATCC 31267 / DSM 46492 / JCM 5070 / NBRC 14893 / NCIMB 12804 / NRRL 8165 / MA-4680).